The chain runs to 324 residues: Glyoxylate/hydroxypyruvate reductase B (324 aa).

Active-site residues include Arg237 and Glu266. The Proton donor role is filled by His285.

This sequence belongs to the D-isomer specific 2-hydroxyacid dehydrogenase family. GhrB subfamily. Homodimer.

It localises to the cytoplasm. The catalysed reaction is glycolate + NADP(+) = glyoxylate + NADPH + H(+). It catalyses the reaction (R)-glycerate + NAD(+) = 3-hydroxypyruvate + NADH + H(+). It carries out the reaction (R)-glycerate + NADP(+) = 3-hydroxypyruvate + NADPH + H(+). In terms of biological role, catalyzes the NADPH-dependent reduction of glyoxylate and hydroxypyruvate into glycolate and glycerate, respectively. In Escherichia coli (strain K12 / MC4100 / BW2952), this protein is Glyoxylate/hydroxypyruvate reductase B.